We begin with the raw amino-acid sequence, 167 residues long: Leptin (167 aa).

An N-terminal signal peptide occupies residues Met1 to Ala21. Cys117 and Cys167 are disulfide-bonded.

It belongs to the leptin family.

The protein localises to the secreted. In terms of biological role, key player in the regulation of energy balance and body weight control. Once released into the circulation, has central and peripheral effects by binding LEPR, found in many tissues, which results in the activation of several major signaling pathways. In the hypothalamus, acts as an appetite-regulating factor that induces a decrease in food intake and an increase in energy consumption by inducing anorexinogenic factors and suppressing orexigenic neuropeptides, also regulates bone mass and secretion of hypothalamo-pituitary-adrenal hormones. In the periphery, increases basal metabolism, influences reproductive function, regulates pancreatic beta-cell function and insulin secretion, is pro-angiogenic for endothelial cell and affects innate and adaptive immunity. In the arcuate nucleus of the hypothalamus, activates by depolarization POMC neurons inducing FOS and SOCS3 expression to release anorexigenic peptides and inhibits by hyperpolarization NPY neurons inducing SOCS3 with a consequent reduction on release of orexigenic peptides. In addition to its known satiety inducing effect, has a modulatory role in nutrient absorption. In the intestine, reduces glucose absorption by enterocytes by activating PKC and leading to a sequential activation of p38, PI3K and ERK signaling pathways which exerts an inhibitory effect on glucose absorption. Acts as a growth factor on certain tissues, through the activation of different signaling pathways increases expression of genes involved in cell cycle regulation such as CCND1, via JAK2-STAT3 pathway, or VEGFA, via MAPK1/3 and PI3K-AKT1 pathways. May also play an apoptotic role via JAK2-STAT3 pathway and up-regulation of BIRC5 expression. Pro-angiogenic, has mitogenic activity on vascular endothelial cells and plays a role in matrix remodeling by regulating the expression of matrix metalloproteinases (MMPs) and tissue inhibitors of metalloproteinases (TIMPs). In innate immunity, modulates the activity and function of neutrophils by increasing chemotaxis and the secretion of oxygen radicals. Increases phagocytosis by macrophages and enhances secretion of pro-inflammatory mediators. Increases cytotoxic ability of NK cells. Plays a pro-inflammatory role, in synergy with IL1B, by inducing NOS2 which promotes the production of IL6, IL8 and Prostaglandin E2, through a signaling pathway that involves JAK2, PI3K, MAP2K1/MEK1 and MAPK14/p38. In adaptive immunity, promotes the switch of memory T-cells towards T helper-1 cell immune responses. Increases CD4(+)CD25(-) T-cell proliferation and reduces autophagy during TCR (T-cell receptor) stimulation, through MTOR signaling pathway activation and BCL2 up-regulation. The chain is Leptin (LEP) from Capra hircus (Goat).